The primary structure comprises 236 residues: Phosphoribosylaminoimidazole-succinocarboxamide synthase (236 aa).

It belongs to the SAICAR synthetase family.

It catalyses the reaction 5-amino-1-(5-phospho-D-ribosyl)imidazole-4-carboxylate + L-aspartate + ATP = (2S)-2-[5-amino-1-(5-phospho-beta-D-ribosyl)imidazole-4-carboxamido]succinate + ADP + phosphate + 2 H(+). It participates in purine metabolism; IMP biosynthesis via de novo pathway; 5-amino-1-(5-phospho-D-ribosyl)imidazole-4-carboxamide from 5-amino-1-(5-phospho-D-ribosyl)imidazole-4-carboxylate: step 1/2. This is Phosphoribosylaminoimidazole-succinocarboxamide synthase from Rickettsia massiliae (strain Mtu5).